The sequence spans 883 residues: Protein P (883 aa).

A terminal protein domain (TP) region spans residues 1–183 (MHPFSRLFRN…GKPYSWEHRQ (183 aa)). The interval 184 to 386 (LVQHNGQQHK…YCIHHIVSSL (203 aa)) is spacer. Residues 298 to 344 (RNSGHTTWFSSASNSNKSRSREKAYSSNSTSKRYSPPLNYEKSDFSS) form a disordered region. The interval 387 to 728 (DDWGPCTVTG…YEELWPVVRQ (342 aa)) is polymerase/reverse transcriptase domain (RT). One can recognise a Reverse transcriptase domain in the interval 397 to 638 (DVTIKSPRTP…NHLHFMGYVI (242 aa)). Mg(2+) contacts are provided by aspartate 469, aspartate 589, and aspartate 590.

The protein belongs to the hepadnaviridae P protein family.

It carries out the reaction DNA(n) + a 2'-deoxyribonucleoside 5'-triphosphate = DNA(n+1) + diphosphate. The catalysed reaction is Endonucleolytic cleavage to 5'-phosphomonoester.. Activated by host HSP70 and HSP40 in vitro to be able to bind the epsilon loop of the pgRNA. Because deletion of the RNase H region renders the protein partly chaperone-independent, the chaperones may be needed indirectly to relieve occlusion of the RNA-binding site by this domain. Inhibited by several reverse-transcriptase inhibitors: Lamivudine, Adefovir and Entecavir. Its function is as follows. Multifunctional enzyme that converts the viral RNA genome into dsDNA in viral cytoplasmic capsids. This enzyme displays a DNA polymerase activity that can copy either DNA or RNA templates, and a ribonuclease H (RNase H) activity that cleaves the RNA strand of RNA-DNA heteroduplexes in a partially processive 3'- to 5'-endonucleasic mode. Neo-synthesized pregenomic RNA (pgRNA) are encapsidated together with the P protein, and reverse-transcribed inside the nucleocapsid. Initiation of reverse-transcription occurs first by binding the epsilon loop on the pgRNA genome, and is initiated by protein priming, thereby the 5'-end of (-)DNA is covalently linked to P protein. Partial (+)DNA is synthesized from the (-)DNA template and generates the relaxed circular DNA (RC-DNA) genome. After budding and infection, the RC-DNA migrates in the nucleus, and is converted into a plasmid-like covalently closed circular DNA (cccDNA). The activity of P protein does not seem to be necessary for cccDNA generation, and is presumably released from (+)DNA by host nuclear DNA repair machinery. This chain is Protein P, found in Woodchuck hepatitis B virus (isolate 2) (WHV).